The primary structure comprises 353 residues: Spermidine/putrescine import ATP-binding protein PotA (353 aa).

In terms of domain architecture, ABC transporter spans 7 to 237 (IRFERVTKEY…PINRFVADFI (231 aa)). 39–46 (GPSGCGKT) is an ATP binding site.

This sequence belongs to the ABC transporter superfamily. Spermidine/putrescine importer (TC 3.A.1.11.1) family. As to quaternary structure, the complex is composed of two ATP-binding proteins (PotA), two transmembrane proteins (PotB and PotC) and a solute-binding protein (PotD).

It is found in the cell membrane. The enzyme catalyses ATP + H2O + polyamine-[polyamine-binding protein]Side 1 = ADP + phosphate + polyamineSide 2 + [polyamine-binding protein]Side 1.. In terms of biological role, part of the ABC transporter complex PotABCD involved in spermidine/putrescine import. Responsible for energy coupling to the transport system. The protein is Spermidine/putrescine import ATP-binding protein PotA of Geobacillus kaustophilus (strain HTA426).